The sequence spans 69 residues: Cytochrome c oxidase subunit 8A, mitochondrial (69 aa).

The transit peptide at 1-25 (MYVVTPLLLRGLTGSARRLPVPRAQ) directs the protein to the mitochondrion. The SIFI-degron signature appears at 2–19 (YVVTPLLLRGLTGSARRL). Over 26-36 (VHSMPPEQKLG) the chain is Mitochondrial matrix. The chain crosses the membrane as a helical span at residues 37 to 60 (VLELAIGFTSCMVTFLLPAGWIMS). Topologically, residues 61-69 (HLESYKKRG) are mitochondrial intermembrane.

Belongs to the cytochrome c oxidase VIII family. As to quaternary structure, component of the cytochrome c oxidase (complex IV, CIV), a multisubunit enzyme composed of 14 subunits. The complex is composed of a catalytic core of 3 subunits MT-CO1, MT-CO2 and MT-CO3, encoded in the mitochondrial DNA, and 11 supernumerary subunits COX4I, COX5A, COX5B, COX6A, COX6B, COX6C, COX7A, COX7B, COX7C, COX8 and NDUFA4, which are encoded in the nuclear genome. The complex exists as a monomer or a dimer and forms supercomplexes (SCs) in the inner mitochondrial membrane with NADH-ubiquinone oxidoreductase (complex I, CI) and ubiquinol-cytochrome c oxidoreductase (cytochrome b-c1 complex, complex III, CIII), resulting in different assemblies (supercomplex SCI(1)III(2)IV(1) and megacomplex MCI(2)III(2)IV(2)). Post-translationally, in response to mitochondrial stress, the precursor protein is ubiquitinated by the SIFI complex in the cytoplasm before mitochondrial import, leading to its degradation. Within the SIFI complex, UBR4 initiates ubiquitin chain that are further elongated or branched by KCMF1.

It is found in the mitochondrion inner membrane. The protein operates within energy metabolism; oxidative phosphorylation. Its function is as follows. Component of the cytochrome c oxidase, the last enzyme in the mitochondrial electron transport chain which drives oxidative phosphorylation. The respiratory chain contains 3 multisubunit complexes succinate dehydrogenase (complex II, CII), ubiquinol-cytochrome c oxidoreductase (cytochrome b-c1 complex, complex III, CIII) and cytochrome c oxidase (complex IV, CIV), that cooperate to transfer electrons derived from NADH and succinate to molecular oxygen, creating an electrochemical gradient over the inner membrane that drives transmembrane transport and the ATP synthase. Cytochrome c oxidase is the component of the respiratory chain that catalyzes the reduction of oxygen to water. Electrons originating from reduced cytochrome c in the intermembrane space (IMS) are transferred via the dinuclear copper A center (CU(A)) of subunit 2 and heme A of subunit 1 to the active site in subunit 1, a binuclear center (BNC) formed by heme A3 and copper B (CU(B)). The BNC reduces molecular oxygen to 2 water molecules using 4 electrons from cytochrome c in the IMS and 4 protons from the mitochondrial matrix. The protein is Cytochrome c oxidase subunit 8A, mitochondrial (COX8A) of Ateles belzebuth (White-bellied spider monkey).